Consider the following 345-residue polypeptide: Phosphate acyltransferase (345 aa).

This sequence belongs to the PlsX family. Homodimer. Probably interacts with PlsY.

The protein localises to the cytoplasm. It catalyses the reaction a fatty acyl-[ACP] + phosphate = an acyl phosphate + holo-[ACP]. Its pathway is lipid metabolism; phospholipid metabolism. Its function is as follows. Catalyzes the reversible formation of acyl-phosphate (acyl-PO(4)) from acyl-[acyl-carrier-protein] (acyl-ACP). This enzyme utilizes acyl-ACP as fatty acyl donor, but not acyl-CoA. The polypeptide is Phosphate acyltransferase (Thermodesulfovibrio yellowstonii (strain ATCC 51303 / DSM 11347 / YP87)).